The primary structure comprises 369 residues: CLIP domain-containing serine protease HP8 (369 aa).

The N-terminal stretch at 1–24 (MKTPFEKIRIISCILVIVSTNVVG) is a signal peptide. Residues 25–81 (QKCNGGANCIPLEECTDLFQQLKQGNSPQLTRLLRGLHCGFEDLNSPKICCPPEFLA) constitute a propeptide that is removed on maturation. The Clip domain maps to 26–75 (KCNGGANCIPLEECTDLFQQLKQGNSPQLTRLLRGLHCGFEDLNSPKICC). 8 disulfide bridges follow: Cys27–Cys74, Cys33–Cys63, Cys39–Cys75, Cys105–Cys239, Cys142–Cys158, Cys186–Cys191, Cys286–Cys303, and Cys313–Cys344. In terms of domain architecture, Peptidase S1 spans 113 to 368 (IFGGIQTEID…FMDWILSKLE (256 aa)). Catalysis depends on His157, which acts as the Charge relay system. Glu177, Asn179, Thr182, and Asp185 together coordinate Ca(2+). Residue Asn179 is glycosylated (N-linked (GlcNAc...) asparagine). Asp219 (charge relay system) is an active-site residue. The active-site Charge relay system is the Ser317.

This sequence belongs to the peptidase S1 family. CLIP subfamily. In the active form, heterodimer of a light chain and a heavy chain; disulfide-linked. Proteolytically cleaved for activation. Cleavage produces a light chain and a catalytic heavy chain which remains covalently associated probably through an interchain disulfide bond. In larvae, expressed in the fat body and hemocytes.

The protein resides in the secreted. It localises to the cytoplasm. With respect to regulation, inhibited by (p-amidinophenyl) methanesulfonyl fluoride, p-nitrophenyl-p'-guanidinobenzoate, D-phenylalanyl-L-prolyl-L-arginyl chloromethane, leupeptin, antipain and to a lesser extent by antithrombin III. Its function is as follows. Endopeptidase with selective post-Arg cleavage site. Functions in the innate immune response to fungal and Gram-positive bacterial infections. Upon pathogen infection promotes nodulation; a cellular defense response in which hemocytes surround and isolate invading pathogens forming aggregates called nodules. Involved in activating nodule formation in response to infection with M.luteus, E.coli or S.cerevisiae. Able to bind the microbes M.luteus, E.coli or S.cerevisiae. According to another report, does not bind microorganisms. In Bombyx mori (Silk moth), this protein is CLIP domain-containing serine protease HP8.